A 226-amino-acid chain; its full sequence is Putative methyltransferase RP459 (226 aa).

Belongs to the methyltransferase superfamily.

In Rickettsia prowazekii (strain Madrid E), this protein is Putative methyltransferase RP459.